The following is a 276-amino-acid chain: Undecaprenyl-diphosphatase (276 aa).

8 helical membrane-spanning segments follow: residues 1 to 21, 39 to 59, 84 to 104, 115 to 135, 159 to 179, 190 to 210, 222 to 242, and 253 to 273; these read MSWL…FLPV, AGAS…LVYF, YWLG…GLLF, LWLV…AEYA, LALV…LFLG, FLLA…DAFA, QLLV…AWFL, and FVGY…TGVV.

Belongs to the UppP family.

It is found in the cell membrane. The enzyme catalyses di-trans,octa-cis-undecaprenyl diphosphate + H2O = di-trans,octa-cis-undecaprenyl phosphate + phosphate + H(+). Functionally, catalyzes the dephosphorylation of undecaprenyl diphosphate (UPP). Confers resistance to bacitracin. The chain is Undecaprenyl-diphosphatase from Mycolicibacterium gilvum (strain PYR-GCK) (Mycobacterium gilvum (strain PYR-GCK)).